The chain runs to 382 residues: Succinyl-diaminopimelate desuccinylase (382 aa).

A Zn(2+)-binding site is contributed by H70. Residue D72 is part of the active site. D103 contributes to the Zn(2+) binding site. Catalysis depends on E137, which acts as the Proton acceptor. The Zn(2+) site is built by E138, E166, and H355.

Belongs to the peptidase M20A family. DapE subfamily. In terms of assembly, homodimer. It depends on Zn(2+) as a cofactor. Requires Co(2+) as cofactor.

It carries out the reaction N-succinyl-(2S,6S)-2,6-diaminopimelate + H2O = (2S,6S)-2,6-diaminopimelate + succinate. It functions in the pathway amino-acid biosynthesis; L-lysine biosynthesis via DAP pathway; LL-2,6-diaminopimelate from (S)-tetrahydrodipicolinate (succinylase route): step 3/3. Its function is as follows. Catalyzes the hydrolysis of N-succinyl-L,L-diaminopimelic acid (SDAP), forming succinate and LL-2,6-diaminopimelate (DAP), an intermediate involved in the bacterial biosynthesis of lysine and meso-diaminopimelic acid, an essential component of bacterial cell walls. This Paracoccus denitrificans (strain Pd 1222) protein is Succinyl-diaminopimelate desuccinylase.